We begin with the raw amino-acid sequence, 840 residues long: MADAEDFCPHLDSIGEVTKEDLILKSKGTCESCGVGGPNLWACLQDGCQSVGCGESYADHSTLHAQDFPSPAHPLKSVPIAVGDDGESESDEDDIKPRGLTGMKNIGNSCYMNAALQALSNCPPLTQFFLECGGLVRTDKKPALCKSYQKLVSELWHKKRPSYVVPSSLYHGIKLINPLFRGYSQQDTQEFLRCLMDQLHEELKEPILPENQEQEEEERDDQREGERGGTTEEDFLSCDSGGEMGDGEGGGGVGTLSEMELLIREEVGRGLSEKEKLKERKLSYCHRRTSSEQADEDADVDTAMIPEPDNDAYMHCSSRSCSPHPVESISKHSSTPPRSSPLRTAHSYVLKKAQVLSGGKKRSEVRYRSVISDIFDGSILSLVQCLTCDRVSTTIETFQDLSLPIPGKEDLAKLHSTIHQSTVIKAGTCGDSYAAQGWLAFVMDYIRRFVVSCIPSWFWGPMITLEDCLAAFFAADELKGDNMYSCERCKKLRNGVKYCKVLRLPEVLCIHLKRFRHEVMYSFKIGSHVSFPLEGLNLRPFLAKECVSRITTYDLLAVICHHGSASSGHYISYCQNVINGQWYEFDDQYVTEVHETVVQNAEAYVLFYRKSSEEAERERQKVVSLAAMKESGLLQFYISREWLNKFNTFAEPGPISNQSFLCAHGGIPPNKYHYIDDLVVILPQSVWEYLYNRFGGGPAVNHLYVCSICQVEIEALAKRRKTEIDTFIKLNKAFQAEEAPSVIYCISMQWFREWEAFVKAKDSDPPGPIDNSKVALTKSSGHVQLKQGADYGQISEETWNYLLNIYGGGPEIAIRQTVAQYQDPEHLHGEQKIEAETRAG.

The segment at 6-117 (DFCPHLDSIG…NSCYMNAALQ (112 aa)) adopts a UBP-type; degenerate zinc-finger fold. 4 residues coordinate Zn(2+): cysteine 30, cysteine 33, cysteine 53, and histidine 60. Residues 101-611 (TGMKNIGNSC…EAYVLFYRKS (511 aa)) enclose the USP domain. Cysteine 110 functions as the Nucleophile in the catalytic mechanism. 2 disordered regions span residues 205–254 (EPIL…GGVG) and 315–342 (HCSS…SSPL). A compositionally biased stretch (basic and acidic residues) spans 220-230 (DDQREGERGGT). A compositionally biased stretch (gly residues) spans 242 to 254 (GEMGDGEGGGGVG). A compositionally biased stretch (low complexity) spans 333-342 (SSTPPRSSPL). Histidine 569 (proton acceptor) is an active-site residue. 2 consecutive DUSP domains span residues 613-706 (EEAE…LYVC) and 715-818 (ALAK…RQTV).

This sequence belongs to the peptidase C19 family. USP20/USP33 subfamily.

The protein localises to the cytoplasm. It is found in the perinuclear region. It localises to the cytoskeleton. Its subcellular location is the microtubule organizing center. The protein resides in the centrosome. It catalyses the reaction Thiol-dependent hydrolysis of ester, thioester, amide, peptide and isopeptide bonds formed by the C-terminal Gly of ubiquitin (a 76-residue protein attached to proteins as an intracellular targeting signal).. In terms of biological role, deubiquitinating enzyme involved in beta-2 adrenergic receptor (adrb2) recycling. Acts as a regulator of G-protein coupled receptor (GPCR) signaling by mediating the deubiquitination beta-2 adrenergic receptor (adrb2). Plays a central role in adrb2 recycling and resensitization after prolonged agonist stimulation by constitutively binding adrb2, mediating deubiquitination of adrb2 and inhibiting lysosomal trafficking of adrb2. Mediates deubiquitination of both 'Lys-48'- and 'Lys-63'-linked polyubiquitin chains. The protein is Ubiquitin carboxyl-terminal hydrolase 20 (usp20) of Xenopus laevis (African clawed frog).